The primary structure comprises 348 residues: 4-hydroxy-2-oxovalerate aldolase 3 (348 aa).

Residues 8–260 (ITVHDMTLRD…ETGVDVWKIQ (253 aa)) enclose the Pyruvate carboxyltransferase domain. 16-17 (RD) contributes to the substrate binding site. Residue Asp-17 coordinates Mn(2+). The active-site Proton acceptor is the His-20. Ser-170 and His-199 together coordinate substrate. Mn(2+) contacts are provided by His-199 and His-201. Tyr-290 lines the substrate pocket.

The protein belongs to the 4-hydroxy-2-oxovalerate aldolase family.

The enzyme catalyses (S)-4-hydroxy-2-oxopentanoate = acetaldehyde + pyruvate. The chain is 4-hydroxy-2-oxovalerate aldolase 3 from Burkholderia lata (strain ATCC 17760 / DSM 23089 / LMG 22485 / NCIMB 9086 / R18194 / 383).